The sequence spans 247 residues: Probable transcriptional regulatory protein PC1_1817 (247 aa).

It belongs to the TACO1 family.

The protein localises to the cytoplasm. The sequence is that of Probable transcriptional regulatory protein PC1_1817 from Pectobacterium carotovorum subsp. carotovorum (strain PC1).